Here is a 130-residue protein sequence, read N- to C-terminus: Protein ApaG (130 aa).

In terms of domain architecture, ApaG spans arginine 3 to arginine 127.

The chain is Protein ApaG from Allorhizobium ampelinum (strain ATCC BAA-846 / DSM 112012 / S4) (Agrobacterium vitis (strain S4)).